The following is a 471-amino-acid chain: Delta(24(24(1)))-sterol reductase erg4A (471 aa).

N15 is a glycosylation site (N-linked (GlcNAc...) asparagine). 8 helical membrane passes run 33–53 (VTLIMIGFPLLMYYMYIGAVL), 89–109 (WTIYWTFLILEGAGYLYLPGV), 130–150 (AVSSWYLTIAAALILHFTGVL), 159–179 (FGPLMSVAICSGIFVSIVAYI), 216–236 (MFFEVRIPWFILFLLTLGTAL), 244–264 (LVAGEVLFLLMAHFLYANACA), 282–302 (GFMLIFWNLAGVPMSYCHCTL), and 313–333 (HWNPWVLAVWAVAYLFMYWVW). NADP(+) is bound by residues K340, R344, L380, and 392–393 (HY). The chain crosses the membrane as a helical span at residues 397-417 (VFFAISWGLITGFNSPFPWFY). Residues D432, 436-440 (CRERY), and Y447 contribute to the NADP(+) site.

Belongs to the ERG4/ERG24 family.

It is found in the endoplasmic reticulum membrane. It catalyses the reaction ergosterol + NADP(+) = ergosta-5,7,22,24(28)-tetraen-3beta-ol + NADPH + H(+). It functions in the pathway steroid metabolism; ergosterol biosynthesis. Functionally, delta(24(24(1)))-sterol reductase; part of the third module of ergosterol biosynthesis pathway that includes the late steps of the pathway. Catalyzes the last step of ergosterol biosynthesis by converting ergosta-5,7,22,24(28)-tetraen-3beta-ol into ergosterol. The third module or late pathway involves the ergosterol synthesis itself through consecutive reactions that mainly occur in the endoplasmic reticulum (ER) membrane. Firstly, the squalene synthase erg9 catalyzes the condensation of 2 farnesyl pyrophosphate moieties to form squalene, which is the precursor of all steroids. Squalene synthase is crucial for balancing the incorporation of farnesyl diphosphate (FPP) into sterol and nonsterol isoprene synthesis. Secondly, squalene is converted into lanosterol by the consecutive action of the squalene epoxidase erg1 and the lanosterol synthase erg7. Then, the delta(24)-sterol C-methyltransferase erg6 methylates lanosterol at C-24 to produce eburicol. Eburicol is the substrate of the sterol 14-alpha demethylase encoded by cyp51A and cyp51B, to yield 4,4,24-trimethyl ergosta-8,14,24(28)-trienol. The C-14 reductase erg24 then reduces the C14=C15 double bond which leads to 4,4-dimethylfecosterol. A sequence of further demethylations at C-4, involving the C-4 demethylation complex containing the C-4 methylsterol oxidases erg25A or erg25B, the sterol-4-alpha-carboxylate 3-dehydrogenase erg26 and the 3-keto-steroid reductase erg27, leads to the production of fecosterol via 4-methylfecosterol. The C-8 sterol isomerase erg2 then catalyzes the reaction which results in unsaturation at C-7 in the B ring of sterols and thus converts fecosterol to episterol. The sterol-C5-desaturase erg3B then catalyzes the introduction of a C-5 double bond in the B ring to produce 5-dehydroepisterol. The 2 other sterol-C5-desaturases, erg3A and erg3C, seem to be less important in ergosterol biosynthesis. The C-22 sterol desaturase erg5 further converts 5-dehydroepisterol into ergosta-5,7,22,24(28)-tetraen-3beta-ol by forming the C-22(23) double bond in the sterol side chain. Finally, ergosta-5,7,22,24(28)-tetraen-3beta-ol is substrate of the C-24(28) sterol reductases erg4A and erg4B to produce ergosterol. Possible alternative sterol biosynthetic pathways might exist from fecosterol to ergosterol, depending on the activities of the erg3 isoforms. The chain is Delta(24(24(1)))-sterol reductase erg4A from Aspergillus fumigatus (strain ATCC MYA-4609 / CBS 101355 / FGSC A1100 / Af293) (Neosartorya fumigata).